We begin with the raw amino-acid sequence, 345 residues long: tRNA-specific 2-thiouridylase MnmA 1 (345 aa).

Residues 9–16 (GMSGGIDS) and leucine 35 contribute to the ATP site. Residue cysteine 96 is the Nucleophile of the active site. A disulfide bond links cysteine 96 and cysteine 191. Residue glycine 120 participates in ATP binding. An interaction with tRNA region spans residues 138-140 (KDQ). Catalysis depends on cysteine 191, which acts as the Cysteine persulfide intermediate. Residues 293–294 (RY) are interaction with tRNA.

It belongs to the MnmA/TRMU family.

The protein localises to the cytoplasm. It catalyses the reaction S-sulfanyl-L-cysteinyl-[protein] + uridine(34) in tRNA + AH2 + ATP = 2-thiouridine(34) in tRNA + L-cysteinyl-[protein] + A + AMP + diphosphate + H(+). Functionally, catalyzes the 2-thiolation of uridine at the wobble position (U34) of tRNA, leading to the formation of s(2)U34. The protein is tRNA-specific 2-thiouridylase MnmA 1 of Aliarcobacter butzleri (strain RM4018) (Arcobacter butzleri).